Consider the following 344-residue polypeptide: L-rhamnose-proton symporter (344 aa).

Helical transmembrane passes span 4 to 24 (AITMGIFWHLIGAASAACFYA), 38 to 58 (WSVGGIVSWIILPWAISALLL), 68 to 88 (FSLSTLLPVFLFGAMWGIGNI), 101 to 121 (MGIGIAIGITLIVGTLMTPII), 137 to 157 (TLLGVLVALIGVGIVTRAGQL), 175 to 195 (LVLAVMCGIFSAGMSFAMNAA), 214 to 234 (LPSYVIIMGGGAIINLGFCFI), 259 to 279 (VLLSALGGLMWYLQFFFYAWG), 290 to 310 (ISWMLHMSFYVLCGGIVGLVL), and 323 to 343 (VLSLGCVVIIVAANIVGIGMA).

This sequence belongs to the L-rhamnose transporter (TC 2.A.7.6) family.

The protein localises to the cell inner membrane. The catalysed reaction is L-rhamnopyranose(in) + H(+)(in) = L-rhamnopyranose(out) + H(+)(out). Functionally, uptake of L-rhamnose across the cytoplasmic membrane with the concomitant transport of protons into the cell (symport system). The chain is L-rhamnose-proton symporter from Escherichia coli (strain 55989 / EAEC).